Consider the following 852-residue polypeptide: Thrombospondin type-1 domain-containing protein 1 (852 aa).

Residues 1 to 24 (MKPMLKDFSNLLLVVLCDYVLGEA) form the signal peptide. Residues 25–413 (EYLLLREPGH…QPQGPVKSNN (389 aa)) lie on the Extracellular side of the membrane. 7 N-linked (GlcNAc...) asparagine glycosylation sites follow: asparagine 39, asparagine 53, asparagine 58, asparagine 69, asparagine 80, asparagine 135, and asparagine 304. The TSP type-1 domain occupies 340-393 (TETWGLWQPWSQCSATCGDGVRERRRVCLTSFPSSPVCPGMSLEASLCSLEECA). Disulfide bonds link cysteine 352–cysteine 387, cysteine 356–cysteine 392, and cysteine 367–cysteine 377. A helical transmembrane segment spans residues 414–434 (IVTVTGISLCLFIIIATVLIT). Residues 435–852 (LWRRFGRPAK…STLSVEKLVI (418 aa)) are Cytoplasmic-facing. Disordered stretches follow at residues 444–517 (KCST…ESFQ) and 624–799 (LIRK…RKDK). Serine 463 carries the post-translational modification Phosphoserine. Residues 645–654 (ARNAHFRRTA) are compositionally biased toward basic residues. Basic and acidic residues predominate over residues 655–669 (SFHEARQARPFRERS). The segment covering 670–685 (MSTLTPRQAPAYSSRT) has biased composition (polar residues). A compositionally biased stretch (basic and acidic residues) spans 686-696 (RTCEQAEDRFR). 2 stretches are compositionally biased toward polar residues: residues 766-778 (SHKS…SSPI) and 785-794 (QRVSSLSPSQ).

Part of a complex composed of THSD1, PTK2/FAK1, TLN1 and VCL. Interacts with TLN1.

The protein localises to the endosome membrane. The protein resides in the cell junction. It localises to the focal adhesion. It is found in the membrane. Its subcellular location is the secreted. Is a positive regulator of nascent focal adhesion assembly, involved in the modulation of endothelial cell attachment to the extracellular matrix. In Homo sapiens (Human), this protein is Thrombospondin type-1 domain-containing protein 1 (THSD1).